The primary structure comprises 205 residues: Holliday junction branch migration complex subunit RuvA (205 aa).

Positions 1-64 (MIGRLNGILV…EDAQLLFGFN (64 aa)) are domain I. The segment at 65-143 (NKVERALFRE…NWGNDLFTPF (79 aa)) is domain II. Residues 144–156 (SDSAVIEPFSDAT) form a flexible linker region. The tract at residues 157-205 (IANNAADDAVSALVSLGYKLPQAQKAVKSVSKPDMSTEVLIKESLKSML) is domain III.

It belongs to the RuvA family. In terms of assembly, homotetramer. Forms an RuvA(8)-RuvB(12)-Holliday junction (HJ) complex. HJ DNA is sandwiched between 2 RuvA tetramers; dsDNA enters through RuvA and exits via RuvB. An RuvB hexamer assembles on each DNA strand where it exits the tetramer. Each RuvB hexamer is contacted by two RuvA subunits (via domain III) on 2 adjacent RuvB subunits; this complex drives branch migration. In the full resolvosome a probable DNA-RuvA(4)-RuvB(12)-RuvC(2) complex forms which resolves the HJ.

It localises to the cytoplasm. Its function is as follows. The RuvA-RuvB-RuvC complex processes Holliday junction (HJ) DNA during genetic recombination and DNA repair, while the RuvA-RuvB complex plays an important role in the rescue of blocked DNA replication forks via replication fork reversal (RFR). RuvA specifically binds to HJ cruciform DNA, conferring on it an open structure. The RuvB hexamer acts as an ATP-dependent pump, pulling dsDNA into and through the RuvAB complex. HJ branch migration allows RuvC to scan DNA until it finds its consensus sequence, where it cleaves and resolves the cruciform DNA. This Pseudoalteromonas translucida (strain TAC 125) protein is Holliday junction branch migration complex subunit RuvA.